A 940-amino-acid polypeptide reads, in one-letter code: UvrABC system protein A (940 aa).

An ATP-binding site is contributed by Gly-31–Ser-38. The segment at Cys-253 to Cys-280 adopts a C4-type zinc-finger fold. ABC transporter domains follow at residues Trp-310 to Leu-587 and Ala-607 to Lys-937. Gly-640–Ser-647 contacts ATP. The C4-type zinc finger occupies Cys-740–Cys-766.

It belongs to the ABC transporter superfamily. UvrA family. As to quaternary structure, forms a heterotetramer with UvrB during the search for lesions.

It localises to the cytoplasm. The UvrABC repair system catalyzes the recognition and processing of DNA lesions. UvrA is an ATPase and a DNA-binding protein. A damage recognition complex composed of 2 UvrA and 2 UvrB subunits scans DNA for abnormalities. When the presence of a lesion has been verified by UvrB, the UvrA molecules dissociate. Functionally, plays a role in recovery after DNA ADP-ribosylation. The protein is UvrABC system protein A of Escherichia coli O127:H6 (strain E2348/69 / EPEC).